A 345-amino-acid polypeptide reads, in one-letter code: Methionine import ATP-binding protein MetN (345 aa).

The ABC transporter domain maps to Ile-2–Ile-241. Gly-38–Ser-45 contributes to the ATP binding site.

It belongs to the ABC transporter superfamily. Methionine importer (TC 3.A.1.24) family. In terms of assembly, the complex is composed of two ATP-binding proteins (MetN), two transmembrane proteins (MetI) and a solute-binding protein (MetQ).

The protein localises to the cell inner membrane. It carries out the reaction L-methionine(out) + ATP + H2O = L-methionine(in) + ADP + phosphate + H(+). It catalyses the reaction D-methionine(out) + ATP + H2O = D-methionine(in) + ADP + phosphate + H(+). In terms of biological role, part of the ABC transporter complex MetNIQ involved in methionine import. Responsible for energy coupling to the transport system. This chain is Methionine import ATP-binding protein MetN, found in Histophilus somni (strain 129Pt) (Haemophilus somnus).